The following is a 226-amino-acid chain: ATP-dependent dethiobiotin synthetase BioD (226 aa).

Residue 12–17 (EVGKTV) participates in ATP binding. Mg(2+) is bound at residue Thr-16. Residue Lys-39 is part of the active site. Thr-43 is a substrate binding site. ATP-binding positions include Asp-47, 108–111 (EALG), 168–169 (NC), and 200–202 (PYI). 2 residues coordinate Mg(2+): Asp-47 and Glu-108.

It belongs to the dethiobiotin synthetase family. In terms of assembly, homodimer. Mg(2+) serves as cofactor.

It localises to the cytoplasm. The enzyme catalyses (7R,8S)-7,8-diammoniononanoate + CO2 + ATP = (4R,5S)-dethiobiotin + ADP + phosphate + 3 H(+). It catalyses the reaction (7R,8S)-8-amino-7-(carboxyamino)nonanoate + ATP = (4R,5S)-dethiobiotin + ADP + phosphate + H(+). The protein operates within cofactor biosynthesis; biotin biosynthesis; biotin from 7,8-diaminononanoate: step 1/2. Catalyzes a mechanistically unusual reaction, the ATP-dependent insertion of CO2 between the N7 and N8 nitrogen atoms of 7,8-diaminopelargonic acid (DAPA, also called 7,8-diammoniononanoate) to form a ureido ring. This cyanobacterium does not encode bioA (which catalyzes the formation of the precursor for this reaction in the cannonical pathway), instead it encodes bioU, which replaces bioA and also performs the first half of the cannonical BioD reaction. Thus in this organism BioD has a different substrate. The protein is ATP-dependent dethiobiotin synthetase BioD of Gloeothece citriformis (strain PCC 7424) (Cyanothece sp. (strain PCC 7424)).